Here is a 392-residue protein sequence, read N- to C-terminus: O-phospho-L-seryl-tRNA:Cys-tRNA synthase 2 (392 aa).

Pyridoxal 5'-phosphate is bound by residues 85–86 (AR), asparagine 190, and 213–215 (SGH). Residue lysine 216 is modified to N6-(pyridoxal phosphate)lysine.

Belongs to the SepCysS family. In terms of assembly, homodimer. Interacts with SepRS. The cofactor is pyridoxal 5'-phosphate.

The enzyme catalyses O-phospho-L-seryl-tRNA(Cys) + hydrogen sulfide + H(+) = L-cysteinyl-tRNA(Cys) + phosphate. Functionally, converts O-phospho-L-seryl-tRNA(Cys) (Sep-tRNA(Cys)) to L-cysteinyl-tRNA(Cys) (Cys-tRNA(Cys)). The chain is O-phospho-L-seryl-tRNA:Cys-tRNA synthase 2 from Methanocorpusculum labreanum (strain ATCC 43576 / DSM 4855 / Z).